The sequence spans 339 residues: Bifunctional protein GlmU (339 aa).

A pyrophosphorylase region spans residues 1 to 234 (MKKENPLAIV…PKDVLGVNSR (234 aa)). Residues 12–15 (LAAG), Lys26, Gln77, and 82–83 (GT) contribute to the UDP-N-acetyl-alpha-D-glucosamine site. A Mg(2+)-binding site is contributed by Asp107. UDP-N-acetyl-alpha-D-glucosamine-binding residues include Gly144, Glu159, Asn174, and Asn232. Asn232 serves as a coordination point for Mg(2+). The tract at residues 235–255 (IELAMADEELRMRRNREVMLT) is linker. The interval 256–339 (GVSMILPATI…KIPAQQREEE (84 aa)) is N-acetyltransferase.

It belongs to the N-acetylglucosamine-1-phosphate uridyltransferase family. As to quaternary structure, homotrimer. The cofactor is Mg(2+).

It localises to the cytoplasm. The catalysed reaction is alpha-D-glucosamine 1-phosphate + acetyl-CoA = N-acetyl-alpha-D-glucosamine 1-phosphate + CoA + H(+). The enzyme catalyses N-acetyl-alpha-D-glucosamine 1-phosphate + UTP + H(+) = UDP-N-acetyl-alpha-D-glucosamine + diphosphate. The protein operates within nucleotide-sugar biosynthesis; UDP-N-acetyl-alpha-D-glucosamine biosynthesis; N-acetyl-alpha-D-glucosamine 1-phosphate from alpha-D-glucosamine 6-phosphate (route II): step 2/2. It participates in nucleotide-sugar biosynthesis; UDP-N-acetyl-alpha-D-glucosamine biosynthesis; UDP-N-acetyl-alpha-D-glucosamine from N-acetyl-alpha-D-glucosamine 1-phosphate: step 1/1. It functions in the pathway bacterial outer membrane biogenesis; LPS lipid A biosynthesis. In terms of biological role, catalyzes the last two sequential reactions in the de novo biosynthetic pathway for UDP-N-acetylglucosamine (UDP-GlcNAc). The C-terminal domain catalyzes the transfer of acetyl group from acetyl coenzyme A to glucosamine-1-phosphate (GlcN-1-P) to produce N-acetylglucosamine-1-phosphate (GlcNAc-1-P), which is converted into UDP-GlcNAc by the transfer of uridine 5-monophosphate (from uridine 5-triphosphate), a reaction catalyzed by the N-terminal domain. The polypeptide is Bifunctional protein GlmU (glmU) (Desulfotalea psychrophila (strain LSv54 / DSM 12343)).